The sequence spans 206 residues: Uridine kinase (206 aa).

Glycine 9–threonine 16 is a binding site for ATP.

The protein belongs to the uridine kinase family.

Its subcellular location is the cytoplasm. The enzyme catalyses uridine + ATP = UMP + ADP + H(+). It carries out the reaction cytidine + ATP = CMP + ADP + H(+). It functions in the pathway pyrimidine metabolism; CTP biosynthesis via salvage pathway; CTP from cytidine: step 1/3. The protein operates within pyrimidine metabolism; UMP biosynthesis via salvage pathway; UMP from uridine: step 1/1. The sequence is that of Uridine kinase from Borrelia hermsii (strain HS1 / DAH).